Reading from the N-terminus, the 309-residue chain is Glutaminase (309 aa).

Substrate is bound by residues serine 64, asparagine 114, glutamate 160, asparagine 167, tyrosine 191, tyrosine 243, and valine 261.

This sequence belongs to the glutaminase family. In terms of assembly, homotetramer.

The catalysed reaction is L-glutamine + H2O = L-glutamate + NH4(+). The polypeptide is Glutaminase (Rhizobium rhizogenes (strain K84 / ATCC BAA-868) (Agrobacterium radiobacter)).